The primary structure comprises 589 residues: ATP-dependent lipid A-core flippase (589 aa).

Helical transmembrane passes span 29-49 (LLLV…TGFL), 70-90 (WLPV…YITD), 157-177 (VIGA…TILV), 261-281 (MIGA…ALAG), and 283-303 (LTAG…PGLK). The ABC transmembrane type-1 domain occupies 32-314 (VAALIAALIE…LTNVQNMVQR (283 aa)). The 237-residue stretch at 346 to 582 (IEFRDVTARY…GGLYSHLHGM (237 aa)) folds into the ABC transporter domain. 380–387 (GRSGSGKS) contacts ATP.

It belongs to the ABC transporter superfamily. Lipid exporter (TC 3.A.1.106) family. Homodimer.

Its subcellular location is the cell inner membrane. The catalysed reaction is ATP + H2O + lipid A-core oligosaccharideSide 1 = ADP + phosphate + lipid A-core oligosaccharideSide 2.. Involved in lipopolysaccharide (LPS) biosynthesis. Translocates lipid A-core from the inner to the outer leaflet of the inner membrane. Transmembrane domains (TMD) form a pore in the inner membrane and the ATP-binding domain (NBD) is responsible for energy generation. This Xanthomonas oryzae pv. oryzae (strain MAFF 311018) protein is ATP-dependent lipid A-core flippase.